Consider the following 323-residue polypeptide: Arginase-1 (323 aa).

Residues 1–27 are disordered; the sequence is MSSKPKPIEIIGAPFSKGQPRGGVEKG. The residue at position 17 (Lys17) is an N6-succinyllysine. Phosphoserine is present on residues Ser62 and Ser72. Lys75 bears the N6-succinyllysine mark. His101, Asp124, His126, and Asp128 together coordinate Mn(2+). Substrate-binding positions include 126–130 and 137–139; these read HTDIN and SGN. Ser163 bears the Phosphoserine mark. Asp183 is a binding site for substrate. Ser217 carries the phosphoserine modification. Residues Asp232 and Asp234 each contribute to the Mn(2+) site. Residues Thr246 and Glu277 each coordinate substrate. Thr281 carries the phosphothreonine modification.

It belongs to the arginase family. As to quaternary structure, homotrimer. Interacts with CMTM6. The cofactor is Mn(2+). Detected in liver (at protein level).

Its subcellular location is the cytoplasm. The protein resides in the cytoplasmic granule. The enzyme catalyses L-arginine + H2O = urea + L-ornithine. Its pathway is nitrogen metabolism; urea cycle; L-ornithine and urea from L-arginine: step 1/1. Its activity is regulated as follows. Inactivated by diethyl pyrocarbonate (DEPC). Its function is as follows. Key element of the urea cycle converting L-arginine to urea and L-ornithine, which is further metabolized into metabolites proline and polyamides that drive collagen synthesis and bioenergetic pathways critical for cell proliferation, respectively; the urea cycle takes place primarily in the liver and, to a lesser extent, in the kidneys. Functions in L-arginine homeostasis in nonhepatic tissues characterized by the competition between nitric oxide synthase (NOS) and arginase for the available intracellular substrate arginine. Arginine metabolism is a critical regulator of innate and adaptive immune responses. Involved in an antimicrobial effector pathway in polymorphonuclear granulocytes (PMN). Upon PMN cell death is liberated from the phagolysosome and depletes arginine in the microenvironment leading to suppressed T cell and natural killer (NK) cell proliferation and cytokine secretion. In group 2 innate lymphoid cells (ILC2s) promotes acute type 2 inflammation in the lung and is involved in optimal ILC2 proliferation but not survival. Plays a role in the immune response of alternatively activated or M2 macrophages in processes such as wound healing and tissue regeneration, immune defense against multicellular pathogens and parasites, and immune suppression and allergic inflammation; the regulatory outcome seems to be organ specific. In tumor-infiltrating dendritic cells (DCs) and myeloid-derived suppressor cells (MDSCs) plays a role in suppression of T cell-mediated antitumor immunity. This chain is Arginase-1 (Arg1), found in Rattus norvegicus (Rat).